The primary structure comprises 100 residues: UPF0213 protein YhbQ (100 aa).

The region spanning 2–77 is the GIY-YIG domain; sequence TPWFLYLIRT…KQLTKRQKER (76 aa).

Belongs to the UPF0213 family.

The chain is UPF0213 protein YhbQ from Escherichia coli O139:H28 (strain E24377A / ETEC).